Reading from the N-terminus, the 365-residue chain is Flavone synthase (365 aa).

The Fe cation site is built by His-76, His-218, Asp-220, and His-276. A Fe2OG dioxygenase domain is found at 194–295 (MEQKVLINYY…RLSIATFQNP (102 aa)). A disordered region spans residues 345 to 365 (RLQDEKAKLEMKSKSADENLA).

This sequence belongs to the iron/ascorbate-dependent oxidoreductase family. Fe cation is required as a cofactor. It depends on L-ascorbate as a cofactor.

The protein resides in the cytoplasm. It catalyses the reaction a flavanone + 2-oxoglutarate + O2 = a flavone + succinate + CO2 + H2O. It participates in secondary metabolite biosynthesis; flavonoid biosynthesis. Functionally, involved in the conversion of naringenin to apigenin. Acts via a direct 2,3-desaturation of flavanones instead of a sequential hydroxylation/dehydratation mechanism. This chain is Flavone synthase (FNSI), found in Petroselinum crispum (Parsley).